Here is a 605-residue protein sequence, read N- to C-terminus: Replication and transcription activator (605 aa).

Disordered regions lie at residues 307–381 and 447–509; these read SLPS…EPEQ and RIRP…EDPD. Over residues 321 to 338 the composition is skewed to low complexity; sequence SADCGDSSSSSSDSGNSD. Residues 341-353 are compositionally biased toward basic and acidic residues; it reads QSEREEARAEAPR. Over residues 355–364 the composition is skewed to basic residues; the sequence is RAPKSRRTSR.

It belongs to the herpesviridae Rta family. As to quaternary structure, interacts with human ATF7IP protein, leading to promote and regulate host genes in virus-infected cells. Interacts with RNA polymerase III complex; this interaction downregulates small RNA transcription and 5'-pppRNA production.

It is found in the host nucleus. It localises to the virion tegument. Immediate-early transcription factor that controls the initiation of viral lytic gene expression and lytic reactivation from latency. Triggers lytic replication, and initiates a cellular senescence program in epithelial cells. Up-regulates human DCR3/TNFRSF6B by directly binding to its receptor. Globally induces a proteasome-dependent loss of SUMOylated proteins in the host cell and the loss of promeylocytic leukemia nuclear bodies. Improves the stability of the triplex capsid protein TRX1 by reducing the ubiquitination level of the latter. Mediates evasion of inflammasome activation and antiviral responses (T- and NK cell activation) during EBV early lytic infection. The polypeptide is Replication and transcription activator (Epstein-Barr virus (strain AG876) (HHV-4)).